A 120-amino-acid chain; its full sequence is Small ribosomal subunit protein uS13 (120 aa).

The interval 92-120 (RRGLPCRGQRTRTNARTRKGPRKPIAGKK) is disordered.

This sequence belongs to the universal ribosomal protein uS13 family. Part of the 30S ribosomal subunit. Forms a loose heterodimer with protein S19. Forms two bridges to the 50S subunit in the 70S ribosome.

Its function is as follows. Located at the top of the head of the 30S subunit, it contacts several helices of the 16S rRNA. In the 70S ribosome it contacts the 23S rRNA (bridge B1a) and protein L5 of the 50S subunit (bridge B1b), connecting the 2 subunits; these bridges are implicated in subunit movement. Contacts the tRNAs in the A and P-sites. This chain is Small ribosomal subunit protein uS13, found in Laribacter hongkongensis (strain HLHK9).